The sequence spans 682 residues: Solute carrier organic anion transporter family member 2B1 (682 aa).

Residues 1–30 form a disordered region; the sequence is MPDRSTKATMGAEDIHERKVSMEPRDSHQD. The Cytoplasmic portion of the chain corresponds to 1 to 41; that stretch reads MPDRSTKATMGAEDIHERKVSMEPRDSHQDAQPRGMFQNIK. Residues 13 to 30 show a composition bias toward basic and acidic residues; that stretch reads EDIHERKVSMEPRDSHQD. Ser-21 bears the Phosphoserine mark. The chain crosses the membrane as a helical span at residues 42–61; it reads FFVLCHSILQLAQLMISGYL. Over 62–80 the chain is Extracellular; the sequence is KSSISTVEKRFGLSSQTSG. Residues 81-101 traverse the membrane as a helical segment; the sequence is LLAAFNEVGNISLILFVSYFG. Topologically, residues 102–107 are cytoplasmic; that stretch reads SRVHRP. Residues 108–132 form a helical membrane-spanning segment; sequence RMIGCGAILVAVAGLLMALPHFISE. Residues 133-176 lie on the Extracellular side of the membrane; the sequence is PYRYDHSSPDRSQDFEASLCLPTTMAPASALSNDSCSSRTETKH. Residue Asn-165 is glycosylated (N-linked (GlcNAc...) asparagine). The chain crosses the membrane as a helical span at residues 177 to 206; sequence LTMVGIMFTAQTLLGIGGVPIQPFGISYID. Residues 207-225 are Cytoplasmic-facing; it reads DFAHHSNSPLYLGILFAIT. Residues 226–246 traverse the membrane as a helical segment; it reads MMGPGLAYGLGSLMLRLYVDI. The Extracellular portion of the chain corresponds to 247–264; sequence DRMPEGGINLTTKDPRWV. Asn-255 is a glycosylation site (N-linked (GlcNAc...) asparagine). A helical transmembrane segment spans residues 265–289; sequence GAWWLGFLISAGLVVLAASPYFFFP. Residues 290–354 are Cytoplasmic-facing; that stretch reads REMPKEKYEL…IKVFPRVLLR (65 aa). Residues Ser-311 and Ser-314 each carry the phosphoserine modification. A helical transmembrane segment spans residues 355–376; it reads TLRHPIFLLVVLSQVCTSSMVA. At 377 to 396 the chain is on the extracellular side; sequence GTATFLPKFLERQFSITASF. The helical transmembrane segment at 397 to 420 threads the bilayer; sequence ANLLLGCLTIPLAIVGIVVGGVLV. At 421-424 the chain is on the cytoplasmic side; it reads KRLH. Residues 425-448 form a helical membrane-spanning segment; sequence LSPMQCSALCLLGSLLCLLLSLPL. Over 449-552 the chain is Extracellular; it reads FFIGCSTHHI…SACSRLVLPF (104 aa). Positions 471 to 531 constitute a Kazal-like domain; it reads PSLFPGCSEP…VFYTNCSCVA (61 aa). Disulfide bonds link Cys-477-Cys-508, Cys-483-Cys-504, and Cys-492-Cys-529. N-linked (GlcNAc...) asparagine glycans are attached at residues Asn-526 and Asn-533. Residues 553 to 575 form a helical membrane-spanning segment; sequence ILLISLGAAVASITHTPSFMLIL. Residues 576–584 are Cytoplasmic-facing; it reads RGVKKEDKT. The helical transmembrane segment at 585–610 threads the bilayer; the sequence is LAVGMQFMLLRVLAWMPSPVIHGSAI. Residues 611–643 lie on the Extracellular side of the membrane; that stretch reads DTTCVHWALTCGRRAVCRYYDHDLLRNRFIGLQ. The helical transmembrane segment at 644 to 661 threads the bilayer; sequence FFFKSGSLVCFALVLAIL. Residues 662-682 are Cytoplasmic-facing; it reads RQQSREASTKATVKSSDLQEL.

This sequence belongs to the organo anion transporter (TC 2.A.60) family. In terms of tissue distribution, expressed in liver, kidney, heart, lung and retina. Widely distributed in all brain regions.

The protein resides in the cell membrane. Its subcellular location is the basal cell membrane. It is found in the apical cell membrane. It carries out the reaction coproporphyrin III(out) = coproporphyrin III(in). The catalysed reaction is substance P(out) = substance P(in). The enzyme catalyses taurocholate(out) = taurocholate(in). It catalyses the reaction prostaglandin E1(out) = prostaglandin E1(in). It carries out the reaction prostaglandin E2(out) = prostaglandin E2(in). The catalysed reaction is prostaglandin D2(out) = prostaglandin D2(in). The enzyme catalyses leukotriene C4(out) = leukotriene C4(in). It catalyses the reaction L-thyroxine(out) = L-thyroxine(in). Functionally, mediates the Na(+)-independent transport of organic anions such as taurocholate, the prostaglandins D2 (PGD2), E1 (PGE1) and E2 (PGE2), leukotriene C4, thromboxane B2 and L-thyroxine. Also plays a role in the reuptake of neuropeptides such as substance P/TAC1 and vasoactive intestinal peptide/VIP released from retinal neurons. May act as a heme transporter that promotes cellular iron availability. Also transports heme by-product coproporphyrin III (CPIII), and may be involved in their hepatic disposition. May contribute to regulate the transport of organic compounds in testis across the blood-testis-barrier. Shows a pH-sensitive substrate specificity which may be ascribed to the protonation state of the binding site and leads to a stimulation of substrate transport in an acidic microenvironment. The exact transport mechanism has not been yet deciphered but most likely involves an anion exchange, coupling the cellular uptake of organic substrate with the efflux of an anionic compound. Hydrogencarbonate/HCO3(-) acts as a probable counteranion that exchanges for organic anions. Cytoplasmic glutamate may also act as counteranion in the placenta. This is Solute carrier organic anion transporter family member 2B1 from Rattus norvegicus (Rat).